The following is a 563-amino-acid chain: PHD finger protein EHD3 (563 aa).

Residues 1–46 (MGSQNRPPPPRKRQPPPPEDHLVTYKRRRSKETQPLPLMANGANSK) are disordered. PHD-type zinc fingers lie at residues 296–348 (LCPC…CSFK), 420–472 (SNLC…CWYC), and 474–524 (SCLC…CKIR).

In terms of assembly, interacts with TRX1. In terms of tissue distribution, expressed in shoot apical meristem and leaves.

The protein resides in the nucleus. Its function is as follows. Probable transcription factor involved in the regulation of floral induction under long day (LD) conditions. Promotes photoperiodic flowering by repressing GHD7, a major floral repressor. Seems to function independently of HD1. This chain is PHD finger protein EHD3, found in Oryza sativa subsp. japonica (Rice).